Consider the following 241-residue polypeptide: MATVSMRDMLKAGVHFGHQTRYWNPKMKPFIFGARNKVHIINLEKTVPMFNEALAELNKIAARKGKILFVGTKRAASEAVKDAALSCDQFFVNHRWLGGMLTNWKTVRQSIKRLKDLETQSQDGTFDKLTKKEALMRTRELDKLENSLGGIKDMGGLPDALFVIDADHEHIAIKEANNLGIPVFAIVDTNSDPDGVDFVIPGNDDAIRAVSLYLGAVAATVREGRSQDLASQAEESFVEAE.

This sequence belongs to the universal ribosomal protein uS2 family.

The chain is Small ribosomal subunit protein uS2 from Klebsiella pneumoniae subsp. pneumoniae (strain ATCC 700721 / MGH 78578).